The chain runs to 621 residues: uncharacterized protein (621 aa).

Phosphoserine is present on residues Ser269, Ser271, Ser274, Ser290, and Ser292. 6 LRR repeats span residues 333 to 354, 357 to 379, 380 to 401, 404 to 425, 426 to 447, and 451 to 472; these read QLLY…VFLS, SLVS…GELP, QLCS…YHIS, HLQI…ENVP, SLEK…RRLV, and NFEE…YRIT. The disordered stretch occupies residues 552-581; that stretch reads SKNASGGDTSSNVSLLNGSASEEIPQNTES.

It is found in the cytoplasm. It localises to the nucleus. The protein resides in the vacuole membrane. This is an uncharacterized protein from Schizosaccharomyces pombe (strain 972 / ATCC 24843) (Fission yeast).